Here is a 417-residue protein sequence, read N- to C-terminus: Probable glucuronosyltransferase Os01g0926700 (417 aa).

At 1–3 (MRR) the chain is on the cytoplasmic side. Residues 4–24 (WVLAIAILAAAVCFFLGAQAQ) form a helical; Signal-anchor for type II membrane protein membrane-spanning segment. At 25-417 (EVRQGHQTER…AGPVGDLKPW (393 aa)) the chain is on the lumenal side. N-linked (GlcNAc...) asparagine glycosylation is found at Asn144 and Asn405.

Belongs to the glycosyltransferase 47 family.

The protein resides in the golgi apparatus membrane. In terms of biological role, involved in the synthesis of glucuronoxylan hemicellulose in secondary cell walls. The polypeptide is Probable glucuronosyltransferase Os01g0926700 (Oryza sativa subsp. japonica (Rice)).